The chain runs to 266 residues: 4-hydroxy-tetrahydrodipicolinate reductase (266 aa).

Residues 8–13 (GAAGRM) and Glu33 contribute to the NAD(+) site. Arg34 serves as a coordination point for NADP(+). Residues 97 to 99 (GST) and 121 to 124 (APNM) each bind NAD(+). Catalysis depends on His154, which acts as the Proton donor/acceptor. His155 contributes to the (S)-2,3,4,5-tetrahydrodipicolinate binding site. The active-site Proton donor is Lys158. 164–165 (GT) provides a ligand contact to (S)-2,3,4,5-tetrahydrodipicolinate.

Belongs to the DapB family.

It is found in the cytoplasm. The enzyme catalyses (S)-2,3,4,5-tetrahydrodipicolinate + NAD(+) + H2O = (2S,4S)-4-hydroxy-2,3,4,5-tetrahydrodipicolinate + NADH + H(+). It carries out the reaction (S)-2,3,4,5-tetrahydrodipicolinate + NADP(+) + H2O = (2S,4S)-4-hydroxy-2,3,4,5-tetrahydrodipicolinate + NADPH + H(+). It functions in the pathway amino-acid biosynthesis; L-lysine biosynthesis via DAP pathway; (S)-tetrahydrodipicolinate from L-aspartate: step 4/4. Functionally, catalyzes the conversion of 4-hydroxy-tetrahydrodipicolinate (HTPA) to tetrahydrodipicolinate. The protein is 4-hydroxy-tetrahydrodipicolinate reductase of Geobacter sulfurreducens (strain ATCC 51573 / DSM 12127 / PCA).